Reading from the N-terminus, the 121-residue chain is NADH-quinone oxidoreductase subunit A 1 (121 aa).

3 consecutive transmembrane segments (helical) span residues 6–26 (FPIF…LSIG), 62–82 (LVAM…PWAV), and 90–110 (FYGL…YYYI).

It belongs to the complex I subunit 3 family. In terms of assembly, NDH-1 is composed of 14 different subunits. Subunits NuoA, H, J, K, L, M, N constitute the membrane sector of the complex.

The protein resides in the cell inner membrane. It catalyses the reaction a quinone + NADH + 5 H(+)(in) = a quinol + NAD(+) + 4 H(+)(out). In terms of biological role, NDH-1 shuttles electrons from NADH, via FMN and iron-sulfur (Fe-S) centers, to quinones in the respiratory chain. The immediate electron acceptor for the enzyme in this species is believed to be a menaquinone. Couples the redox reaction to proton translocation (for every two electrons transferred, four hydrogen ions are translocated across the cytoplasmic membrane), and thus conserves the redox energy in a proton gradient. The protein is NADH-quinone oxidoreductase subunit A 1 of Chloroherpeton thalassium (strain ATCC 35110 / GB-78).